A 475-amino-acid chain; its full sequence is Aspartyl/glutamyl-tRNA(Asn/Gln) amidotransferase subunit B (475 aa).

It belongs to the GatB/GatE family. GatB subfamily. In terms of assembly, heterotrimer of A, B and C subunits.

The enzyme catalyses L-glutamyl-tRNA(Gln) + L-glutamine + ATP + H2O = L-glutaminyl-tRNA(Gln) + L-glutamate + ADP + phosphate + H(+). The catalysed reaction is L-aspartyl-tRNA(Asn) + L-glutamine + ATP + H2O = L-asparaginyl-tRNA(Asn) + L-glutamate + ADP + phosphate + 2 H(+). Allows the formation of correctly charged Asn-tRNA(Asn) or Gln-tRNA(Gln) through the transamidation of misacylated Asp-tRNA(Asn) or Glu-tRNA(Gln) in organisms which lack either or both of asparaginyl-tRNA or glutaminyl-tRNA synthetases. The reaction takes place in the presence of glutamine and ATP through an activated phospho-Asp-tRNA(Asn) or phospho-Glu-tRNA(Gln). The polypeptide is Aspartyl/glutamyl-tRNA(Asn/Gln) amidotransferase subunit B (Bacillus anthracis (strain A0248)).